A 389-amino-acid polypeptide reads, in one-letter code: Cell wall mannoprotein HSP150 (389 aa).

A signal peptide spans 1–18; it reads MQYKKTLVASALAATTLA. Residues 19–72 constitute a propeptide that is removed on maturation; the sequence is AYAPSEPWSTLTPTATYSGGVTDYASTFGIAVQPISTTSSASSAATTASSKAKR. 10 PIR1/2/3 repeats span residues 71–89, 97–115, 116–134, 140–158, 164–182, 183–201, 202–220, 221–239, 240–257, and 258–276; these read KRAA…TTTA, AAAV…TKTT, AAAV…TTTL, AAAV…TTKT, and TQAA…TATS.

The protein belongs to the PIR protein family. Post-translationally, covalently linked to beta-1,3-glucan of the inner cell wall layer via an alkali-sensitive ester linkage between the gamma-carboxyl group of glutamic acids, arising from specific glutamines within the PIR1/2/3 repeats, and hydroxyl groups of glucoses of beta-1,3-glucan chains. In terms of processing, the propeptide is cleaved off in the late Golgi. While both peptides are secreted, only a fraction of the mature glycoprotein is incorporated into the cell wall. O-glycosylated. Extensively O-mannosylated.

It localises to the secreted. Its subcellular location is the cell wall. Functionally, component of the outer cell wall layer. Required for stability of the cell wall and for optimal growth. Required for resistance against several antifungal and cell wall-perturbing agents and for tolerance to heat shock. The sequence is that of Cell wall mannoprotein HSP150 (HSP150) from Saccharomyces cerevisiae (strain YJM789) (Baker's yeast).